A 985-amino-acid polypeptide reads, in one-letter code: Vacuolar membrane protease (985 aa).

The Cytoplasmic segment spans residues 1–20; that stretch reads MASSRAQRFNPIAFTPWPVT. A helical membrane pass occupies residues 21–41; it reads CITTIVYLALLIPILVINLVV. The Vacuolar portion of the chain corresponds to 42–388; that stretch reads PSAPETNPKG…MFGTAFAVFR (347 aa). Residues Asn-53, Asn-116, and Asn-119 are each glycosylated (N-linked (GlcNAc...) asparagine). Residues His-175 and Asp-187 each contribute to the Zn(2+) site. Catalysis depends on Glu-221, which acts as the Proton acceptor. Glu-222 lines the Zn(2+) pocket. Asn-238 is a glycosylation site (N-linked (GlcNAc...) asparagine). Zn(2+) is bound by residues Glu-247 and His-320. Residues 389 to 409 form a helical membrane-spanning segment; it reads LHTLFAISVALLVIAPLVIFV. The Cytoplasmic portion of the chain corresponds to 410–440; sequence TNRMYLFSMSKSLEGTGDQVSLRGLRGFSRT. Residues 441 to 461 traverse the membrane as a helical segment; it reads PIILVTATTIPICLAYLLEKV. The Vacuolar segment spans residues 462 to 470; it reads NPYIVHSSQ. A helical membrane pass occupies residues 471–491; sequence FSVWSMMFSAWIFLAWFLACA. Residues 492-502 are Cytoplasmic-facing; it reads ADFFRPSALHR. Residues 503–523 traverse the membrane as a helical segment; the sequence is AYSYTWIFIATWIMLVINTVY. At 524-527 the chain is on the vacuolar side; it reads ANQK. Residues 528–548 form a helical membrane-spanning segment; that stretch reads GIAAGYFLLFYFAGAFLATWI. Topologically, residues 549 to 666 are cytoplasmic; the sequence is SYLELFALPR…TLPRWTWVLQ (118 aa). The segment at 563-612 is disordered; sequence ARQTTGRRPSSLSSRLLTSSADELRSNASPSTAEFPGAAGEDTDPTESTS. Over residues 566–582 the composition is skewed to low complexity; that stretch reads TTGRRPSSLSSRLLTSS. The chain crosses the membrane as a helical span at residues 667-687; sequence LLLLAPIVLILVGQLALFLTA. The Vacuolar portion of the chain corresponds to 688–700; sequence SMCQVGSDGVSTF. The helical transmembrane segment at 701–721 threads the bilayer; it reads VVYLACAVFTTLLCIPLFPLI. Over 722 to 727 the chain is Cytoplasmic; that stretch reads HRFTYH. The chain crosses the membrane as a helical span at residues 728 to 748; the sequence is IPTFLFLVFIGTLIYNLVAFP. Topologically, residues 749–985 are vacuolar; sequence FSPANRLKTF…VEASHSFTIQ (237 aa). Asn-767, Asn-795, and Asn-839 each carry an N-linked (GlcNAc...) asparagine glycan.

It belongs to the peptidase M28 family. Zn(2+) serves as cofactor.

It localises to the vacuole membrane. In terms of biological role, may be involved in vacuolar sorting and osmoregulation. The polypeptide is Vacuolar membrane protease (Ajellomyces capsulatus (strain G186AR / H82 / ATCC MYA-2454 / RMSCC 2432) (Darling's disease fungus)).